Consider the following 279-residue polypeptide: Undecaprenyl-diphosphatase (279 aa).

7 consecutive transmembrane segments (helical) span residues 10–30 (FICFKSIFLGIIQGFTEFLPI), 48–68 (LGVSFSASIQLGSAVAIIYYF), 96–116 (LFLYIFVASIPILVFGLLIKL), 128–148 (GLFSIAITSIVMALLLALSEI), 203–223 (SFLVGIPAVSISGLVELFSLF), 229–249 (IDIIPIIIGIISSFFSSIFAI), and 259–279 (NNTLVFVYYRLAFGIFILTTL).

Belongs to the UppP family.

It is found in the cell inner membrane. The catalysed reaction is di-trans,octa-cis-undecaprenyl diphosphate + H2O = di-trans,octa-cis-undecaprenyl phosphate + phosphate + H(+). Catalyzes the dephosphorylation of undecaprenyl diphosphate (UPP). Confers resistance to bacitracin. In Prochlorococcus marinus (strain NATL2A), this protein is Undecaprenyl-diphosphatase.